Reading from the N-terminus, the 838-residue chain is Protein translocase subunit SecA (838 aa).

ATP is bound by residues Gln86, 104–108 (GEGKT), and Asp493. The segment at 793–838 (NTQAVSGGEDSGKKKTKKPVVKSNTVKRNDPCPCGSGKKYKNCHGQ) is disordered. Zn(2+) contacts are provided by Cys824, Cys826, Cys835, and His836.

This sequence belongs to the SecA family. In terms of assembly, monomer and homodimer. Part of the essential Sec protein translocation apparatus which comprises SecA, SecYEG and auxiliary proteins SecDF. Other proteins may also be involved. Zn(2+) is required as a cofactor.

Its subcellular location is the cell membrane. The protein resides in the cytoplasm. It carries out the reaction ATP + H2O + cellular proteinSide 1 = ADP + phosphate + cellular proteinSide 2.. Part of the Sec protein translocase complex. Interacts with the SecYEG preprotein conducting channel. Has a central role in coupling the hydrolysis of ATP to the transfer of proteins into and across the cell membrane, serving as an ATP-driven molecular motor driving the stepwise translocation of polypeptide chains across the membrane. In Oceanobacillus iheyensis (strain DSM 14371 / CIP 107618 / JCM 11309 / KCTC 3954 / HTE831), this protein is Protein translocase subunit SecA.